We begin with the raw amino-acid sequence, 403 residues long: Arginine biosynthesis bifunctional protein ArgJ (403 aa).

Substrate is bound by residues Thr-151, Lys-177, Thr-188, Glu-275, Asn-398, and Ser-403. Catalysis depends on Thr-188, which acts as the Nucleophile.

The protein belongs to the ArgJ family. As to quaternary structure, heterotetramer of two alpha and two beta chains.

It localises to the cytoplasm. It catalyses the reaction N(2)-acetyl-L-ornithine + L-glutamate = N-acetyl-L-glutamate + L-ornithine. The enzyme catalyses L-glutamate + acetyl-CoA = N-acetyl-L-glutamate + CoA + H(+). The protein operates within amino-acid biosynthesis; L-arginine biosynthesis; L-ornithine and N-acetyl-L-glutamate from L-glutamate and N(2)-acetyl-L-ornithine (cyclic): step 1/1. It participates in amino-acid biosynthesis; L-arginine biosynthesis; N(2)-acetyl-L-ornithine from L-glutamate: step 1/4. Its function is as follows. Catalyzes two activities which are involved in the cyclic version of arginine biosynthesis: the synthesis of N-acetylglutamate from glutamate and acetyl-CoA as the acetyl donor, and of ornithine by transacetylation between N(2)-acetylornithine and glutamate. In Caulobacter vibrioides (strain ATCC 19089 / CIP 103742 / CB 15) (Caulobacter crescentus), this protein is Arginine biosynthesis bifunctional protein ArgJ.